The sequence spans 328 residues: POU domain, class 5, transcription factor 2 (328 aa).

Residues 1–25 (MAGHRPSNHFCPLPGSGGGGPRGPM) are disordered. A POU-specific domain is found at 118 to 192 (DISGILKELQ…LLKKWLKEVE (75 aa)). Positions 210–269 (GKWRRASRERRIGNSLEKFFQRCPKPTPQQISHIAGCLQLQKDVVRVWFYNRSKMGSRPT) form a DNA-binding region, homeobox.

The protein belongs to the POU transcription factor family. Class-5 subfamily. In terms of tissue distribution, expressed in skeletal and cardiac muscles, brain, heart and lung. Little or no detectable expression found in pancreas, kidney, liver or placenta.

The protein resides in the nucleus. Transcription factor that binds preferentially to the octamer motif (5'-ATGTTAAT-3'). May exert a regulatory function in meiotic events that are required for terminal differentiation of male germ cell. This is POU domain, class 5, transcription factor 2 (POU5F2) from Homo sapiens (Human).